A 185-amino-acid polypeptide reads, in one-letter code: Ribose 1,5-bisphosphate phosphokinase PhnN (185 aa).

10–17 provides a ligand contact to ATP; the sequence is GPSGSGKD.

The protein belongs to the ribose 1,5-bisphosphokinase family.

The catalysed reaction is alpha-D-ribose 1,5-bisphosphate + ATP = 5-phospho-alpha-D-ribose 1-diphosphate + ADP. Its pathway is metabolic intermediate biosynthesis; 5-phospho-alpha-D-ribose 1-diphosphate biosynthesis; 5-phospho-alpha-D-ribose 1-diphosphate from D-ribose 5-phosphate (route II): step 3/3. Catalyzes the phosphorylation of ribose 1,5-bisphosphate to 5-phospho-D-ribosyl alpha-1-diphosphate (PRPP). This Escherichia coli O157:H7 protein is Ribose 1,5-bisphosphate phosphokinase PhnN.